A 505-amino-acid polypeptide reads, in one-letter code: Deoxyguanosinetriphosphate triphosphohydrolase (505 aa).

Positions 66–273 (RLTHSMEVQQ…MEAADDISYC (208 aa)) constitute an HD domain.

This sequence belongs to the dGTPase family. Type 1 subfamily. In terms of assembly, homotetramer. The cofactor is Mg(2+).

The enzyme catalyses dGTP + H2O = 2'-deoxyguanosine + triphosphate + H(+). Functionally, dGTPase preferentially hydrolyzes dGTP over the other canonical NTPs. In Salmonella schwarzengrund (strain CVM19633), this protein is Deoxyguanosinetriphosphate triphosphohydrolase.